The primary structure comprises 768 residues: DNA topoisomerase 4 subunit A (768 aa).

Positions 38–521 constitute a Topo IIA-type catalytic domain; sequence LPEVSDGQKP…AGRAVLTQTA (484 aa). Y126 functions as the O-(5'-phospho-DNA)-tyrosine intermediate in the catalytic mechanism.

This sequence belongs to the type II topoisomerase GyrA/ParC subunit family. ParC type 1 subfamily. As to quaternary structure, heterotetramer composed of ParC and ParE.

The protein resides in the cell membrane. The catalysed reaction is ATP-dependent breakage, passage and rejoining of double-stranded DNA.. Topoisomerase IV is essential for chromosome segregation. It relaxes supercoiled DNA. Performs the decatenation events required during the replication of a circular DNA molecule. The sequence is that of DNA topoisomerase 4 subunit A from Neisseria gonorrhoeae.